An 84-amino-acid polypeptide reads, in one-letter code: Esculentin-1ISb (84 aa).

Positions 1-22 are cleaved as a signal peptide; the sequence is MFTLKKPLLLIVLLGIISLSLC. Positions 23–36 are cleaved as a propeptide — removed in mature form; that stretch reads EQERAADEDEGTKI. Cysteines 78 and 84 form a disulfide.

In terms of tissue distribution, expressed by the skin glands.

The protein localises to the secreted. In terms of biological role, has antimicrobial activity against Gram-negative bacterium E.coli ATCC 8739 (MIC=3.1 ug), against Gram positive bacteria S.aureus ATCC 6538 (MIC=3.1 ug), methicillin-resistant S.aureus ATCC 43300 (MIC=12.5 ug), B.subtilis ATCC 6633 (MIC=12.5 ug) and against fungus C.albicans ATCC 90028 (MIC=50 ug). The protein is Esculentin-1ISb of Odorrana ishikawae (Ishikawa's frog).